Consider the following 124-residue polypeptide: uncharacterized protein (124 aa).

Positions 1–19 (MRLLVQKVILIYLARYAKS) are cleaved as a signal peptide. The next 2 membrane-spanning stretches (helical) occupy residues 37 to 57 (IAEFLWVYVGSALAYVVGVKF) and 86 to 108 (LGALALITIARAFCVAHINIIII).

It is found in the membrane. This is an uncharacterized protein from Saccharomyces cerevisiae (strain ATCC 204508 / S288c) (Baker's yeast).